The following is a 265-amino-acid chain: MIESQRHSYHLVDPSPWPISGSLGALATTVGGVMYMHSFQGGATLLSLGLIFILYTMFVWWRDVLRESTLEGHHTKVVQLGPRYGFILFIVSEVMFLFALFRASSHSSLAPTVEIGGIWPPKGIAVLDPREIPFLNTPIPLSSGAAVTWAHHAILAGKEKRAVYALVATVSLALVFTAFQGMEYYQAPSTISDSIYGSTFFLATGFHGFHVIIGTLFSIVCGIRQYLGHLTKEHHVGFEAAAWYWHFVDVVRLFPFVSIYWWGGI.

A run of 6 helical transmembrane segments spans residues 16 to 36 (PWPI…VMYM), 41 to 61 (GGAT…FVWW), 81 to 101 (GPRY…FALF), 162 to 182 (AVYA…FQGM), 200 to 220 (FFLA…FSIV), and 245 to 265 (WHFV…WGGI).

The protein belongs to the cytochrome c oxidase subunit 3 family. Component of the cytochrome c oxidase (complex IV, CIV), a multisubunit enzyme composed of a catalytic core of 3 subunits and several supernumerary subunits. The complex exists as a monomer or a dimer and forms supercomplexes (SCs) in the inner mitochondrial membrane with ubiquinol-cytochrome c oxidoreductase (cytochrome b-c1 complex, complex III, CIII).

The protein localises to the mitochondrion inner membrane. The catalysed reaction is 4 Fe(II)-[cytochrome c] + O2 + 8 H(+)(in) = 4 Fe(III)-[cytochrome c] + 2 H2O + 4 H(+)(out). Component of the cytochrome c oxidase, the last enzyme in the mitochondrial electron transport chain which drives oxidative phosphorylation. The respiratory chain contains 3 multisubunit complexes succinate dehydrogenase (complex II, CII), ubiquinol-cytochrome c oxidoreductase (cytochrome b-c1 complex, complex III, CIII) and cytochrome c oxidase (complex IV, CIV), that cooperate to transfer electrons derived from NADH and succinate to molecular oxygen, creating an electrochemical gradient over the inner membrane that drives transmembrane transport and the ATP synthase. Cytochrome c oxidase is the component of the respiratory chain that catalyzes the reduction of oxygen to water. Electrons originating from reduced cytochrome c in the intermembrane space (IMS) are transferred via the dinuclear copper A center (CU(A)) of subunit 2 and heme A of subunit 1 to the active site in subunit 1, a binuclear center (BNC) formed by heme A3 and copper B (CU(B)). The BNC reduces molecular oxygen to 2 water molecules using 4 electrons from cytochrome c in the IMS and 4 protons from the mitochondrial matrix. The chain is Cytochrome c oxidase subunit 3 (COX3) from Helianthus annuus (Common sunflower).